The primary structure comprises 232 residues: Fibrillarin-like rRNA/tRNA 2'-O-methyltransferase (232 aa).

S-adenosyl-L-methionine is bound by residues 87 to 88 (TT), 105 to 106 (EF), 130 to 131 (DA), and 150 to 153 (DVAQ).

This sequence belongs to the methyltransferase superfamily. Fibrillarin family. Interacts with nop5. Component of box C/D small ribonucleoprotein (sRNP) particles that contain rpl7ae, FlpA and nop5, plus a guide RNA.

In terms of biological role, involved in pre-rRNA and tRNA processing. Utilizes the methyl donor S-adenosyl-L-methionine to catalyze the site-specific 2'-hydroxyl methylation of ribose moieties in rRNA and tRNA. Site specificity is provided by a guide RNA that base pairs with the substrate. Methylation occurs at a characteristic distance from the sequence involved in base pairing with the guide RNA. This is Fibrillarin-like rRNA/tRNA 2'-O-methyltransferase from Methanococcus maripaludis (strain C7 / ATCC BAA-1331).